The chain runs to 230 residues: Claudin-2 (230 aa).

At 1-7 (MASLGLQ) the chain is on the cytoplasmic side. A helical transmembrane segment spans residues 8–28 (LVGYILGLLGLLGTLVAMLLP). At 29-81 (SWRTSSYVGTSIVTAVGFSKGLWMECATHSTGITQCDIYSTLLGLPADIQAAQ) the chain is on the extracellular side. An intrachain disulfide couples C54 to C64. The chain crosses the membrane as a helical span at residues 82-102 (AMMVTSSAISSLACIVSVVGM). Over 103–116 (RCTVFCQDSRAKDR) the chain is Cytoplasmic. Residues 117–137 (LAVVGGVFFIIGGLLGFIPVA) traverse the membrane as a helical segment. The Extracellular segment spans residues 138–162 (WNLHGILRDFYSPLVPDSMKFEIGE). A helical membrane pass occupies residues 163-183 (ALYLGIISSLFSLVAGIILCF). The Cytoplasmic segment spans residues 184–230 (SCPLQGNRSDYYDSYQAQPLATRGSPRPGQPPKAKSEFNSYSLTGYV). Residues 205-230 (TRGSPRPGQPPKAKSEFNSYSLTGYV) are disordered. A Glycyl lysine isopeptide (Lys-Gly) (interchain with G-Cter in SUMO) cross-link involves residue K218. A phosphoserine mark is found at S219 and S223. A compositionally biased stretch (polar residues) spans 220-230 (EFNSYSLTGYV). The tract at residues 229–230 (YV) is interaction with TJP1, TJP2 and TJP3.

This sequence belongs to the claudin family. As to quaternary structure, can form homo- and heteropolymers with other claudins to mediate paracellular barrier and channel functions of tight junctions in response to physiological stimuli. Homopolymers interact with CLDN3, but not CLDN1, homopolymers. Directly interacts with TJP1/ZO-1, TJP2/ZO-2 and TJP3/ZO-3. Post-translationally, the disulfide bond is necessary for pore formation, but is not required for correct protein trafficking.

The protein localises to the cell junction. It is found in the tight junction. It localises to the cell membrane. The enzyme catalyses Na(+)(in) = Na(+)(out). It catalyses the reaction K(+)(in) = K(+)(out). It carries out the reaction Rb(+)(in) = Rb(+)(out). The catalysed reaction is Li(+)(in) = Li(+)(out). The enzyme catalyses Cs(+)(in) = Cs(+)(out). It catalyses the reaction Ca(2+)(in) = Ca(2+)(out). It carries out the reaction methylamine(out) = methylamine(in). The catalysed reaction is choline(out) = choline(in). The enzyme catalyses H2O(in) = H2O(out). Functionally, forms paracellular channels: polymerizes in tight junction strands with cation- and water-selective channels through the strands, conveying epithelial permeability in a process known as paracellular tight junction permeability. In intestinal epithelium, allows for sodium and water fluxes from the peritoneal side to the lumen of the intestine to regulate nutrient absorption and clear enteric pathogens as part of mucosal immune response. In kidney, allows passive sodium and calcium reabsorption across proximal tubules from the lumen back to the bloodstream. In the hepatobiliary tract, allows paracellular water and cation fluxes in the hepatic perivenous areas and biliary epithelium to generate bile flow and maintain osmotic gradients. This is Claudin-2 (CLDN2) from Canis lupus familiaris (Dog).